The chain runs to 554 residues: Urocanate hydratase (554 aa).

NAD(+) contacts are provided by residues 50-51, glutamine 128, 174-176, glutamate 194, arginine 199, 240-241, 261-265, 271-272, and tyrosine 320; these read GG, GMG, NA, QTSAH, and YI. Residue cysteine 408 is part of the active site. Glycine 490 serves as a coordination point for NAD(+).

It belongs to the urocanase family. NAD(+) serves as cofactor.

It is found in the cytoplasm. The enzyme catalyses 4-imidazolone-5-propanoate = trans-urocanate + H2O. It participates in amino-acid degradation; L-histidine degradation into L-glutamate; N-formimidoyl-L-glutamate from L-histidine: step 2/3. Its function is as follows. Catalyzes the conversion of urocanate to 4-imidazolone-5-propionate. This is Urocanate hydratase from Rubrobacter xylanophilus (strain DSM 9941 / JCM 11954 / NBRC 16129 / PRD-1).